Consider the following 496-residue polypeptide: Aspartyl/glutamyl-tRNA(Asn/Gln) amidotransferase subunit B (496 aa).

Belongs to the GatB/GatE family. GatB subfamily. In terms of assembly, heterotrimer of A, B and C subunits.

The catalysed reaction is L-glutamyl-tRNA(Gln) + L-glutamine + ATP + H2O = L-glutaminyl-tRNA(Gln) + L-glutamate + ADP + phosphate + H(+). It catalyses the reaction L-aspartyl-tRNA(Asn) + L-glutamine + ATP + H2O = L-asparaginyl-tRNA(Asn) + L-glutamate + ADP + phosphate + 2 H(+). Allows the formation of correctly charged Asn-tRNA(Asn) or Gln-tRNA(Gln) through the transamidation of misacylated Asp-tRNA(Asn) or Glu-tRNA(Gln) in organisms which lack either or both of asparaginyl-tRNA or glutaminyl-tRNA synthetases. The reaction takes place in the presence of glutamine and ATP through an activated phospho-Asp-tRNA(Asn) or phospho-Glu-tRNA(Gln). The sequence is that of Aspartyl/glutamyl-tRNA(Asn/Gln) amidotransferase subunit B from Nitrosospira multiformis (strain ATCC 25196 / NCIMB 11849 / C 71).